We begin with the raw amino-acid sequence, 231 residues long: LexA repressor (231 aa).

Positions 1–24 are disordered; it reads MTDRKEHKMKPGRRPTEGMTPSQE. The H-T-H motif DNA-binding region spans 43 to 62; the sequence is VKEIAEALGMKTPSAHEQVQ. Residues Ser146 and Lys183 each act as for autocatalytic cleavage activity in the active site.

The protein belongs to the peptidase S24 family. Homodimer.

The enzyme catalyses Hydrolysis of Ala-|-Gly bond in repressor LexA.. Represses a number of genes involved in the response to DNA damage (SOS response), including recA and lexA. In the presence of single-stranded DNA, RecA interacts with LexA causing an autocatalytic cleavage which disrupts the DNA-binding part of LexA, leading to derepression of the SOS regulon and eventually DNA repair. This chain is LexA repressor, found in Magnetococcus marinus (strain ATCC BAA-1437 / JCM 17883 / MC-1).